The chain runs to 182 residues: Putative manganese efflux pump MntP (182 aa).

Transmembrane regions (helical) follow at residues 3–23 (ILLLAVALSMDCVALSMSNGA), 42–62 (FFQGAMPIIGFFLGALFVGFI), 65–85 (IDHFVAFAILGFLGVKMIFDS), 126–146 (IWFSCAIIAFVCFILSFAATF), and 161–181 (ILGGLILIFIGFKILITHLGI).

This sequence belongs to the MntP (TC 9.B.29) family.

It localises to the cell inner membrane. Probably functions as a manganese efflux pump. This is Putative manganese efflux pump MntP from Campylobacter hominis (strain ATCC BAA-381 / DSM 21671 / CCUG 45161 / LMG 19568 / NCTC 13146 / CH001A).